The chain runs to 485 residues: Argininosuccinate lyase (485 aa).

This sequence belongs to the lyase 1 family. Argininosuccinate lyase subfamily.

The protein localises to the cytoplasm. It catalyses the reaction 2-(N(omega)-L-arginino)succinate = fumarate + L-arginine. The protein operates within amino-acid biosynthesis; L-arginine biosynthesis; L-arginine from L-ornithine and carbamoyl phosphate: step 3/3. In Paracidovorax citrulli (strain AAC00-1) (Acidovorax citrulli), this protein is Argininosuccinate lyase.